We begin with the raw amino-acid sequence, 647 residues long: Threonine--tRNA ligase (647 aa).

Residues 1–61 (MINITFPDGA…TEDGSIEIVT (61 aa)) enclose the TGS domain. Residues 242-540 (DHRKLGKELD…LIENYKGAFP (299 aa)) form a catalytic region. C336, H387, and H517 together coordinate Zn(2+).

The protein belongs to the class-II aminoacyl-tRNA synthetase family. In terms of assembly, homodimer. Zn(2+) is required as a cofactor.

The protein resides in the cytoplasm. It catalyses the reaction tRNA(Thr) + L-threonine + ATP = L-threonyl-tRNA(Thr) + AMP + diphosphate + H(+). Catalyzes the attachment of threonine to tRNA(Thr) in a two-step reaction: L-threonine is first activated by ATP to form Thr-AMP and then transferred to the acceptor end of tRNA(Thr). Also edits incorrectly charged L-seryl-tRNA(Thr). This is Threonine--tRNA ligase from Streptococcus pneumoniae (strain JJA).